Consider the following 199-residue polypeptide: Recombination protein RecR (199 aa).

Residues 57–72 (CSICGNITDEDPCAIC) form a C4-type zinc finger. In terms of domain architecture, Toprim spans 80–176 (STILVVEQPK…KVTRLAHGLS (97 aa)).

This sequence belongs to the RecR family.

In terms of biological role, may play a role in DNA repair. It seems to be involved in an RecBC-independent recombinational process of DNA repair. It may act with RecF and RecO. This Lacticaseibacillus casei (strain BL23) (Lactobacillus casei) protein is Recombination protein RecR.